The sequence spans 185 residues: Elongation factor P (185 aa).

Belongs to the elongation factor P family.

Its subcellular location is the cytoplasm. Its pathway is protein biosynthesis; polypeptide chain elongation. In terms of biological role, involved in peptide bond synthesis. Stimulates efficient translation and peptide-bond synthesis on native or reconstituted 70S ribosomes in vitro. Probably functions indirectly by altering the affinity of the ribosome for aminoacyl-tRNA, thus increasing their reactivity as acceptors for peptidyl transferase. This Dictyoglomus turgidum (strain DSM 6724 / Z-1310) protein is Elongation factor P.